The primary structure comprises 148 residues: Sec-independent protein translocase protein TatB (148 aa).

Residues 1–21 (MFDIGFWELVVIGIVALVVLG) traverse the membrane as a helical segment.

The protein belongs to the TatB family. As to quaternary structure, the Tat system comprises two distinct complexes: a TatABC complex, containing multiple copies of TatA, TatB and TatC subunits, and a separate TatA complex, containing only TatA subunits. Substrates initially bind to the TatABC complex, which probably triggers association of the separate TatA complex to form the active translocon.

The protein resides in the cell inner membrane. Its function is as follows. Part of the twin-arginine translocation (Tat) system that transports large folded proteins containing a characteristic twin-arginine motif in their signal peptide across membranes. Together with TatC, TatB is part of a receptor directly interacting with Tat signal peptides. TatB may form an oligomeric binding site that transiently accommodates folded Tat precursor proteins before their translocation. This Aeromonas salmonicida (strain A449) protein is Sec-independent protein translocase protein TatB.